The following is a 529-amino-acid chain: MSPSEYALEVAKRRTFAIISHPDAGKTTITEKVLLFGHAIQTAGTVKGRGSSHHAKSDWMEMEKQRGISITTSVMQFPYGGCLVNLLDTPGHEDFSEDTYRTLTAVDCCLMVIDAAKGVEDRTRKLMEVTRLRDTPILTFMNKLDREIRDPMEVLDEVERELNIACSPITWPIGCGKSFKGVYHLHKDETYLYQSGKGHTIQEVRIVKGLNNPDLDVAVGEDLAKQFRQELELVQGASHEFDHEAFLSGDLTPVFFGTALGNFGVDHMLDGLVEWAPAPMPRKTDTRVVVASEEKFTGFVFKIQANMDPKHRDRVAFMRVVSGRFEKGMKLRQVRTKKDVVISDALTFMAGDRSHVEEAYAGDIIGLHNHGTIQIGDTFTQGEDMKFTGIPNFAPELFRRIRLRDPLKQKQLLKGLVQLSEEGAVQVFRPLSNNDLIVGAVGVLQFEVVSSRLKSEYNVEAVYESVNVSTARWVECNDVKKFEEFKRKNELNLALDGGDNLSYIAPTMVNLNITQERYPDVIFRKTREH.

Residues 11-280 enclose the tr-type G domain; sequence AKRRTFAIIS…GLVEWAPAPM (270 aa). GTP-binding positions include 20–27, 88–92, and 142–145; these read SHPDAGKT, DTPGH, and NKLD.

It belongs to the TRAFAC class translation factor GTPase superfamily. Classic translation factor GTPase family. PrfC subfamily.

The protein localises to the cytoplasm. Functionally, increases the formation of ribosomal termination complexes and stimulates activities of RF-1 and RF-2. It binds guanine nucleotides and has strong preference for UGA stop codons. It may interact directly with the ribosome. The stimulation of RF-1 and RF-2 is significantly reduced by GTP and GDP, but not by GMP. The chain is Peptide chain release factor 3 from Yersinia pseudotuberculosis serotype O:1b (strain IP 31758).